A 530-amino-acid polypeptide reads, in one-letter code: Autoinducer-2 kinase (530 aa).

This sequence belongs to the FGGY kinase family.

It is found in the cytoplasm. The catalysed reaction is (S)-4,5-dihydroxypentane-2,3-dione + ATP = (2S)-2-hydroxy-3,4-dioxopentyl phosphate + ADP + H(+). Functionally, catalyzes the phosphorylation of autoinducer-2 (AI-2) to phospho-AI-2, which subsequently inactivates the transcriptional regulator LsrR and leads to the transcription of the lsr operon. Phosphorylates the ring-open form of (S)-4,5-dihydroxypentane-2,3-dione (DPD), which is the precursor to all AI-2 signaling molecules, at the C5 position. The sequence is that of Autoinducer-2 kinase from Yersinia pestis bv. Antiqua (strain Antiqua).